A 1392-amino-acid polypeptide reads, in one-letter code: DNA-directed RNA polymerase subunit beta'' (1392 aa).

The Zn(2+) site is built by cysteine 224, cysteine 295, cysteine 302, and cysteine 305.

This sequence belongs to the RNA polymerase beta' chain family. RpoC2 subfamily. As to quaternary structure, in plastids the minimal PEP RNA polymerase catalytic core is composed of four subunits: alpha, beta, beta', and beta''. When a (nuclear-encoded) sigma factor is associated with the core the holoenzyme is formed, which can initiate transcription. Requires Zn(2+) as cofactor.

Its subcellular location is the plastid. It localises to the chloroplast. The enzyme catalyses RNA(n) + a ribonucleoside 5'-triphosphate = RNA(n+1) + diphosphate. DNA-dependent RNA polymerase catalyzes the transcription of DNA into RNA using the four ribonucleoside triphosphates as substrates. The chain is DNA-directed RNA polymerase subunit beta'' from Nicotiana tomentosiformis (Tobacco).